Here is a 495-residue protein sequence, read N- to C-terminus: MLLLELKKTNQTLGTIHFIGIGGVGMSGIAEILHNLGYKVQGSDLVENYNTKRLESYGIKIFLGQAKQNIKNVSYVVISSAINQNNPEIKEALERKIPIIRRAEMLAELMRLKCSVAVSGSHGKTTTTSLIACLFEAAGLCPTVINGGIINNKSTNAYLGSSNYLIAEADESDATFIHIPSTIAIITNIDPEHLDYYQDFEILIGAFRSFITNLPFYGFAVCCIDHKIVRKLVDDITERKIITYGIDSEDAHIIAFNINTDIASSTFDVKISLPNVLGTTIIEKITIPTPGRHNILNSLAAIAVGIELDFGIKAIKNGFNNFKGVKRRFTKVAEYNKAVIIDDYAHHPEEIKATLATAKNIANQQNGKVIAIFQPHRYSRIKYLFDDFMLCFADADILYITNIYAAGETPIEGITGQSLVDKMTQNKHHDKANFLAELDDVVSIIIDNAASGDMIIMMGAGNISSFANELDRRLLSHEILENTDCDTKSNDKVMQ.

120–126 (GSHGKTT) contributes to the ATP binding site.

This sequence belongs to the MurCDEF family.

Its subcellular location is the cytoplasm. The enzyme catalyses UDP-N-acetyl-alpha-D-muramate + L-alanine + ATP = UDP-N-acetyl-alpha-D-muramoyl-L-alanine + ADP + phosphate + H(+). The protein operates within cell wall biogenesis; peptidoglycan biosynthesis. Cell wall formation. This chain is UDP-N-acetylmuramate--L-alanine ligase, found in Rickettsia prowazekii (strain Madrid E).